Consider the following 432-residue polypeptide: Glutamate-1-semialdehyde 2,1-aminomutase (432 aa).

An N6-(pyridoxal phosphate)lysine modification is found at Lys-269.

This sequence belongs to the class-III pyridoxal-phosphate-dependent aminotransferase family. HemL subfamily. Homodimer. Pyridoxal 5'-phosphate is required as a cofactor.

It is found in the cytoplasm. It carries out the reaction (S)-4-amino-5-oxopentanoate = 5-aminolevulinate. Its pathway is porphyrin-containing compound metabolism; protoporphyrin-IX biosynthesis; 5-aminolevulinate from L-glutamyl-tRNA(Glu): step 2/2. The protein operates within porphyrin-containing compound metabolism; chlorophyll biosynthesis. This Chloroherpeton thalassium (strain ATCC 35110 / GB-78) protein is Glutamate-1-semialdehyde 2,1-aminomutase.